The sequence spans 256 residues: Type III pantothenate kinase (256 aa).

An ATP-binding site is contributed by 7 to 14; sequence DVGNTRLK. Residues Tyr-96 and 103 to 106 each bind substrate; that span reads GADR. The Proton acceptor role is filled by Asp-105. Thr-133 is an ATP binding site. A substrate-binding site is contributed by Thr-183.

It belongs to the type III pantothenate kinase family. As to quaternary structure, homodimer. NH4(+) serves as cofactor. The cofactor is K(+).

The protein resides in the cytoplasm. It catalyses the reaction (R)-pantothenate + ATP = (R)-4'-phosphopantothenate + ADP + H(+). It participates in cofactor biosynthesis; coenzyme A biosynthesis; CoA from (R)-pantothenate: step 1/5. Its function is as follows. Catalyzes the phosphorylation of pantothenate (Pan), the first step in CoA biosynthesis. The chain is Type III pantothenate kinase from Verminephrobacter eiseniae (strain EF01-2).